The primary structure comprises 87 residues: Small ribosomal subunit protein uS15c (87 aa).

Belongs to the universal ribosomal protein uS15 family. As to quaternary structure, part of the 30S ribosomal subunit.

It is found in the plastid. The protein localises to the chloroplast. In Solanum lycopersicum (Tomato), this protein is Small ribosomal subunit protein uS15c (rps15).